Here is a 435-residue protein sequence, read N- to C-terminus: T-box transcription factor T (435 aa).

A DNA-binding region (T-box) is located at residues 51–219 (LWLRFKELTN…YNPFAKAFLD (169 aa)). Residues 279–308 (YPTLRSHRSSPYPSPYAHRNNSPTYSDNSP) form a disordered region. The span at 297–308 (RNNSPTYSDNSP) shows a compositional bias: polar residues.

As to quaternary structure, monomer. Detected in testis, but not in other, normal tissues. Detected in lung tumors (at protein level).

It is found in the nucleus. Involved in the transcriptional regulation of genes required for mesoderm formation and differentiation. Binds to a palindromic T site 5'-TTCACACCTAGGTGTGAA-3' DNA sequence and activates gene transcription when bound to such a site. This is T-box transcription factor T from Homo sapiens (Human).